The sequence spans 220 residues: Small ribosomal subunit protein uS2 (220 aa).

It belongs to the universal ribosomal protein uS2 family.

In Methanococcus maripaludis (strain C5 / ATCC BAA-1333), this protein is Small ribosomal subunit protein uS2.